The sequence spans 225 residues: Heptaprenylglyceryl phosphate synthase (225 aa).

Sn-glycerol 1-phosphate is bound at residue K6. D8 and T34 together coordinate Mg(2+). Residues 153–158 (YVEYSG), G183, and 203–204 (GN) each bind sn-glycerol 1-phosphate.

The protein belongs to the GGGP/HepGP synthase family. Group I subfamily. In terms of assembly, homodimer. It depends on Mg(2+) as a cofactor.

It carries out the reaction sn-glycerol 1-phosphate + all-trans-heptaprenyl diphosphate = 3-heptaprenyl-sn-glycero-1-phosphate + diphosphate. Its pathway is membrane lipid metabolism; glycerophospholipid metabolism. In terms of biological role, prenyltransferase that catalyzes in vivo the transfer of the heptaprenyl moiety of heptaprenyl pyrophosphate (HepPP; 35 carbon atoms) to the C3 hydroxyl of sn-glycerol-1-phosphate (G1P), producing heptaprenylglyceryl phosphate (HepGP). This reaction is an ether-bond-formation step in the biosynthesis of archaea-type G1P-based membrane lipids found in Bacillales. The chain is Heptaprenylglyceryl phosphate synthase from Listeria innocua serovar 6a (strain ATCC BAA-680 / CLIP 11262).